A 154-amino-acid polypeptide reads, in one-letter code: MAGPVKDREAFQRLNFLYQAAHCVLAQDPENQALARFYCHTERTIAKRLVLRRDPSVKRTLCRGCSSLLVPGLTCTQRQRRCRGQRWTVQTCLTCQRSQRFLNDPGHLLWGDRPEAQLGNQADSKPLQPLPNTAHSISDHLPEEKMQIQGSSDQ.

Alanine 2 carries the post-translational modification N-acetylalanine. Zn(2+)-binding residues include cysteine 62, cysteine 65, cysteine 92, and cysteine 95. The interval 112-154 (DRPEAQLGNQADSKPLQPLPNTAHSISDHLPEEKMQIQGSSDQ) is disordered. The segment covering 137 to 146 (ISDHLPEEKM) has biased composition (basic and acidic residues).

Belongs to the eukaryotic/archaeal RNase P protein component 4 family. RNase P consists of a catalytic RNA moiety and about 10 protein subunits; POP1, POP4, POP5, POP7, RPP14, RPP21, RPP25, RPP30, RPP38 and RPP40. Within the RNase P complex, POP1, POP7 and RPP25 form the 'finger' subcomplex, POP5, RPP14, RPP40 and homodimeric RPP30 form the 'palm' subcomplex, and RPP21, POP4 and RPP38 form the 'wrist' subcomplex. All subunits of the RNase P complex interact with the catalytic RNA.

It is found in the nucleus. The protein localises to the nucleolus. Functionally, component of ribonuclease P, a ribonucleoprotein complex that generates mature tRNA molecules by cleaving their 5'-ends. The polypeptide is Ribonuclease P protein subunit p21 (RPP21) (Macaca mulatta (Rhesus macaque)).